Reading from the N-terminus, the 509-residue chain is Ribonuclease Y (509 aa).

A helical membrane pass occupies residues 5–25 (IIILLSVFCGIFFICFIICSS). One can recognise a KH domain in the interval 199 to 259 (TTNIVKLPSD…IRREIATRTL (61 aa)). The HD domain occupies 325–418 (VLAHSIEVAK…VAIADSISAS (94 aa)).

The protein belongs to the RNase Y family.

Its subcellular location is the cell membrane. In terms of biological role, endoribonuclease that initiates mRNA decay. The sequence is that of Ribonuclease Y from Mycoplasma capricolum subsp. capricolum (strain California kid / ATCC 27343 / NCTC 10154).